A 351-amino-acid polypeptide reads, in one-letter code: uncharacterized protein (351 aa).

Residues 1 to 27 (MKNKKRVLIASSLSCAILLLSAATTQA) form the signal peptide. Positions 27-71 (ANSAHKDSQDQNKKEHVDKSQQKDKRNVTNKDKNSTAPDDIGKNG) are disordered. Over residues 30–60 (AHKDSQDQNKKEHVDKSQQKDKRNVTNKDKN) the composition is skewed to basic and acidic residues.

The protein belongs to the aerolysin family.

This is an uncharacterized protein from Staphylococcus aureus (strain USA300).